Reading from the N-terminus, the 481-residue chain is Sulfate adenylyltransferase subunit 1 (481 aa).

The tr-type G domain maps to 22–236 (KDLLRFITCG…LLDSIRLDAD (215 aa)). Residues 31 to 38 (GSVDDGKS) form a G1 region. Residue 31-38 (GSVDDGKS) participates in GTP binding. The G2 stretch occupies residues 89-93 (GITID). The interval 110-113 (DCPG) is G3. GTP contacts are provided by residues 110 to 114 (DCPGH) and 165 to 168 (NKMD). The interval 165 to 168 (NKMD) is G4. The segment at 202–204 (SAL) is G5.

It belongs to the TRAFAC class translation factor GTPase superfamily. Classic translation factor GTPase family. CysN/NodQ subfamily. In terms of assembly, heterodimer composed of CysD, the smaller subunit, and CysN.

It catalyses the reaction sulfate + ATP + H(+) = adenosine 5'-phosphosulfate + diphosphate. It participates in sulfur metabolism; hydrogen sulfide biosynthesis; sulfite from sulfate: step 1/3. With CysD forms the ATP sulfurylase (ATPS) that catalyzes the adenylation of sulfate producing adenosine 5'-phosphosulfate (APS) and diphosphate, the first enzymatic step in sulfur assimilation pathway. APS synthesis involves the formation of a high-energy phosphoric-sulfuric acid anhydride bond driven by GTP hydrolysis by CysN coupled to ATP hydrolysis by CysD. This Laribacter hongkongensis (strain HLHK9) protein is Sulfate adenylyltransferase subunit 1.